Reading from the N-terminus, the 392-residue chain is tRNA (guanine-N(7)-)-methyltransferase (392 aa).

S-adenosyl-L-methionine-binding residues include Glu-123, Glu-148, and Asp-175. Substrate is bound by residues Lys-201 and Asp-231.

It belongs to the class I-like SAM-binding methyltransferase superfamily. TrmB family.

The catalysed reaction is guanosine(46) in tRNA + S-adenosyl-L-methionine = N(7)-methylguanosine(46) in tRNA + S-adenosyl-L-homocysteine. Its pathway is tRNA modification; N(7)-methylguanine-tRNA biosynthesis. Catalyzes the formation of N(7)-methylguanine at position 46 (m7G46) in tRNA. The protein is tRNA (guanine-N(7)-)-methyltransferase of Campylobacter jejuni subsp. jejuni serotype O:2 (strain ATCC 700819 / NCTC 11168).